The sequence spans 491 residues: Probable glycine dehydrogenase (decarboxylating) subunit 2 (491 aa).

An N6-(pyridoxal phosphate)lysine modification is found at lysine 273.

The protein belongs to the GcvP family. C-terminal subunit subfamily. As to quaternary structure, the glycine cleavage system is composed of four proteins: P, T, L and H. In this organism, the P 'protein' is a heterodimer of two subunits. The cofactor is pyridoxal 5'-phosphate.

The enzyme catalyses N(6)-[(R)-lipoyl]-L-lysyl-[glycine-cleavage complex H protein] + glycine + H(+) = N(6)-[(R)-S(8)-aminomethyldihydrolipoyl]-L-lysyl-[glycine-cleavage complex H protein] + CO2. Its function is as follows. The glycine cleavage system catalyzes the degradation of glycine. The P protein binds the alpha-amino group of glycine through its pyridoxal phosphate cofactor; CO(2) is released and the remaining methylamine moiety is then transferred to the lipoamide cofactor of the H protein. The sequence is that of Probable glycine dehydrogenase (decarboxylating) subunit 2 from Bacillus cereus (strain G9842).